The following is a 150-amino-acid chain: Large ribosomal subunit protein bL9 (150 aa).

It belongs to the bacterial ribosomal protein bL9 family.

Functionally, binds to the 23S rRNA. This is Large ribosomal subunit protein bL9 from Renibacterium salmoninarum (strain ATCC 33209 / DSM 20767 / JCM 11484 / NBRC 15589 / NCIMB 2235).